We begin with the raw amino-acid sequence, 211 residues long: Thiamine-phosphate synthase (211 aa).

4-amino-2-methyl-5-(diphosphooxymethyl)pyrimidine is bound by residues 37–41 and Asn-69; that span reads QLRIK. Residues Asp-70 and Asp-89 each contribute to the Mg(2+) site. Ser-108 is a binding site for 4-amino-2-methyl-5-(diphosphooxymethyl)pyrimidine. Residue 134-136 participates in 2-[(2R,5Z)-2-carboxy-4-methylthiazol-5(2H)-ylidene]ethyl phosphate binding; sequence TQT. Lys-137 contacts 4-amino-2-methyl-5-(diphosphooxymethyl)pyrimidine. Residues Gly-166 and 186–187 contribute to the 2-[(2R,5Z)-2-carboxy-4-methylthiazol-5(2H)-ylidene]ethyl phosphate site; that span reads VS.

This sequence belongs to the thiamine-phosphate synthase family. Mg(2+) serves as cofactor.

The enzyme catalyses 2-[(2R,5Z)-2-carboxy-4-methylthiazol-5(2H)-ylidene]ethyl phosphate + 4-amino-2-methyl-5-(diphosphooxymethyl)pyrimidine + 2 H(+) = thiamine phosphate + CO2 + diphosphate. It catalyses the reaction 2-(2-carboxy-4-methylthiazol-5-yl)ethyl phosphate + 4-amino-2-methyl-5-(diphosphooxymethyl)pyrimidine + 2 H(+) = thiamine phosphate + CO2 + diphosphate. It carries out the reaction 4-methyl-5-(2-phosphooxyethyl)-thiazole + 4-amino-2-methyl-5-(diphosphooxymethyl)pyrimidine + H(+) = thiamine phosphate + diphosphate. Its pathway is cofactor biosynthesis; thiamine diphosphate biosynthesis; thiamine phosphate from 4-amino-2-methyl-5-diphosphomethylpyrimidine and 4-methyl-5-(2-phosphoethyl)-thiazole: step 1/1. Condenses 4-methyl-5-(beta-hydroxyethyl)thiazole monophosphate (THZ-P) and 2-methyl-4-amino-5-hydroxymethyl pyrimidine pyrophosphate (HMP-PP) to form thiamine monophosphate (TMP). This is Thiamine-phosphate synthase from Salmonella dublin (strain CT_02021853).